The primary structure comprises 212 residues: Ion-translocating oxidoreductase complex subunit G (212 aa).

A helical transmembrane segment spans residues 9 to 29 (GLLLGLFALLCTGLVAIVNQL). Residue T176 is modified to FMN phosphoryl threonine.

Belongs to the RnfG family. The complex is composed of six subunits: RnfA, RnfB, RnfC, RnfD, RnfE and RnfG. Requires FMN as cofactor.

Its subcellular location is the cell inner membrane. Its function is as follows. Part of a membrane-bound complex that couples electron transfer with translocation of ions across the membrane. This Shewanella piezotolerans (strain WP3 / JCM 13877) protein is Ion-translocating oxidoreductase complex subunit G.